We begin with the raw amino-acid sequence, 639 residues long: Mediator of RNA polymerase II transcription subunit 17 (639 aa).

Residues 32 to 43 show a composition bias toward polar residues; it reads ASATVTTNGTTA. Disordered stretches follow at residues 32–68 and 130–159; these read ASAT…EEHS and MGDA…NNDS. A compositionally biased stretch (low complexity) spans 48–57; the sequence is DSGSQQSVSS. Over residues 58–68 the composition is skewed to polar residues; sequence APIQQNSEEHS. Residues 245 to 271 are a coiled coil; that stretch reads WKLRSLEDSKALLKENYAKLQKSLEVE.

This sequence belongs to the Mediator complex subunit 17 family. As to quaternary structure, component of the Mediator complex.

Its subcellular location is the nucleus. Component of the Mediator complex, a coactivator involved in the regulated transcription of nearly all RNA polymerase II-dependent genes. Mediator functions as a bridge to convey information from gene-specific regulatory proteins to the basal RNA polymerase II transcription machinery. Mediator is recruited to promoters by direct interactions with regulatory proteins and serves as a scaffold for the assembly of a functional preinitiation complex with RNA polymerase II and the general transcription factors. The protein is Mediator of RNA polymerase II transcription subunit 17 (SRB4) of Eremothecium gossypii (strain ATCC 10895 / CBS 109.51 / FGSC 9923 / NRRL Y-1056) (Yeast).